The sequence spans 457 residues: Phosphoglucosamine mutase (457 aa).

The active-site Phosphoserine intermediate is S106. Mg(2+) is bound by residues S106, D245, D247, and D249. Residue S106 is modified to Phosphoserine.

This sequence belongs to the phosphohexose mutase family. Mg(2+) serves as cofactor. Activated by phosphorylation.

It carries out the reaction alpha-D-glucosamine 1-phosphate = D-glucosamine 6-phosphate. Its function is as follows. Catalyzes the conversion of glucosamine-6-phosphate to glucosamine-1-phosphate. The chain is Phosphoglucosamine mutase from Methylibium petroleiphilum (strain ATCC BAA-1232 / LMG 22953 / PM1).